The chain runs to 192 residues: MSAIDCIITAAGLSSRMGQWKMMLPWEQGTILDTSIKNALQFCSRIILVTGYRGNELHERYANQSNITIIHNPDYAQGLLTSVKAAVPAVQTEHCFLTHGDMPTLTIDIFRKIWSLRNDGAILPLHNGIPGHPILVSKPCLMQAIQRPNVTNMRQALLMGDHYSVEIENAEIILDIDTPDDFITAKERYTEI.

Position 101 (D101) interacts with Mg(2+).

In terms of assembly, monomer. Interacts with the Moco-binding chaperone PaoD. Requires Mg(2+) as cofactor. The cofactor is Mn(2+).

The enzyme catalyses Mo-molybdopterin + CTP + H(+) = Mo-molybdopterin cytosine dinucleotide + diphosphate. Transfers a CMP moiety from CTP to Mo-molybdopterin (Mo-MPT) cofactor (Moco or molybdenum cofactor) to form Mo-molybdopterin cytosine dinucleotide (Mo-MCD) cofactor. Is specific for CTP; other nucleotides such as ATP and GTP cannot be utilized. Is also able to convert MPT to MCD in the absence of molybdate, however, with only one catalytic turnover. In Escherichia coli (strain K12), this protein is Molybdenum cofactor cytidylyltransferase (mocA).